A 311-amino-acid chain; its full sequence is 26S proteasome regulatory subunit RPN11 (311 aa).

In terms of domain architecture, MPN spans 32 to 167 (VYISSLALLK…IDAFRLISPA (136 aa)). Zn(2+) is bound by residues H114, H116, and D127. Positions 114 to 127 (HSHPGFGCWLSSVD) match the JAMM motif motif.

This sequence belongs to the peptidase M67A family.

Functionally, acts as a regulatory subunit of the 26 proteasome which is involved in the ATP-dependent degradation of ubiquitinated proteins. The sequence is that of 26S proteasome regulatory subunit RPN11 (RPN11) from Eremothecium gossypii (strain ATCC 10895 / CBS 109.51 / FGSC 9923 / NRRL Y-1056) (Yeast).